Reading from the N-terminus, the 473-residue chain is Keratin, type I cytoskeletal 16 (473 aa).

Residues 1–116 (MTTCSRQFTS…AGGDGLLVGS (116 aa)) form a head region. Positions 117–152 (EKVTMQNLNDRLASYLDKVRALEEANADLEVKIRDW) are coil 1A. An IF rod domain is found at 117–428 (EKVTMQNLND…RLLEGEDAHL (312 aa)). Residues 153–170 (YQRQRPSEIKDYSPYFKT) are linker 1. Positions 171-262 (IEDLRNKIIA…KNHEEEMLAL (92 aa)) are coil 1B. The segment at 263–285 (RGQTGGDVNVEMDAAPGVDLSRI) is linker 12. The coil 2 stretch occupies residues 286–424 (LNEMRDQYEQ…ATYRRLLEGE (139 aa)). Residues 425–473 (DAHLSSQQASGQSYSSREVFTSSSSSSSRQTRPILKEQSSSSFSQGQSS) form a tail region. The segment at 428-473 (LSSQQASGQSYSSREVFTSSSSSSSRQTRPILKEQSSSSFSQGQSS) is disordered. Low complexity-rich tracts occupy residues 429 to 452 (SSQQ…SSSS) and 462 to 473 (QSSSSFSQGQSS).

It belongs to the intermediate filament family. Heterodimer of a type I and a type II keratin. KRT16 associates with KRT6 isomers (KRT6A or KRT6B). Interacts with TCHP. Interacts with TRADD. Expressed in the corneal epithelium (at protein level).

Epidermis-specific type I keratin that plays a key role in skin. Acts as a regulator of innate immunity in response to skin barrier breach: required for some inflammatory checkpoint for the skin barrier maintenance. The chain is Keratin, type I cytoskeletal 16 (KRT16) from Homo sapiens (Human).